We begin with the raw amino-acid sequence, 160 residues long: V-type proton ATPase subunit c (160 aa).

Residues 1–8 (MTELCPVY) lie on the Vacuolar side of the membrane. Residues 9 to 31 (APFFGAIGCASAIIFTSLGAAYG) form a helical membrane-spanning segment. The Cytoplasmic segment spans residues 32–53 (TAKSGVGICATCVLRPDLLFKN). Residues 54–74 (IVPVIMAGIIAIYGLVVSVLV) traverse the membrane as a helical segment. Over 75–90 (CYSLGQKQALYTGFIQ) the chain is Vacuolar. The helical transmembrane segment at 91-112 (LGAGLSVGLSGLAAGFAIGIVG) threads the bilayer. Over 113 to 124 (DAGVRGSSQQPR) the chain is Cytoplasmic. Residues 125–150 (LFVGMILILIFAEVLGLYGLIVALLL) traverse the membrane as a helical segment. The Vacuolar portion of the chain corresponds to 151–160 (NSRATQDVVC).

It belongs to the V-ATPase proteolipid subunit family. V-ATPase is a heteromultimeric enzyme composed of a peripheral catalytic V1 complex (components A to H) attached to an integral membrane V0 proton pore complex (components: a, c, c', c'', d, e, f and VOA1). The decameric c-ring forms the proton-conducting pore, and is composed of eight proteolipid subunits c, one subunit c' and one subunit c''.

The protein localises to the vacuole membrane. In terms of biological role, proton-conducting pore forming subunit of the V0 complex of vacuolar(H+)-ATPase (V-ATPase), a multisubunit enzyme composed of a peripheral complex (V1) that hydrolyzes ATP and a membrane integral complex (V0) that translocates protons. V-ATPase is responsible for acidifying and maintaining the pH of intracellular compartments. The polypeptide is V-type proton ATPase subunit c (VMA3) (Saccharomyces cerevisiae (strain ATCC 204508 / S288c) (Baker's yeast)).